The sequence spans 204 residues: Thioredoxin-like 4, chloroplastic (204 aa).

The transit peptide at 1–27 (MSSLLNISHCSYHGYSGLTSRGGINTV) directs the protein to the chloroplast. Positions 63-201 (AKSLSQENLV…IDAAILKYTS (139 aa)) constitute a Thioredoxin domain. Residues Cys-119 and Cys-122 each act as nucleophile in the active site. An intrachain disulfide couples Cys-119 to Cys-122.

This sequence belongs to the thioredoxin family.

The protein resides in the plastid. The protein localises to the chloroplast. Its function is as follows. Probable thiol-disulfide oxidoreductase that may participate in various redox reactions. This Arabidopsis thaliana (Mouse-ear cress) protein is Thioredoxin-like 4, chloroplastic.